The sequence spans 147 residues: Sec-independent protein translocase protein TatB (147 aa).

The helical transmembrane segment at 2–22 (FSSIGWPEIFTVLILGLIIIG) threads the bilayer. The interval 96 to 147 (FDPKKIMASGTEGEAYRERGINPQPAGDSASPQTPSNKESQPKAGFSWDDIT) is disordered. Residues 125-134 (ASPQTPSNKE) show a composition bias toward polar residues.

It belongs to the TatB family. In terms of assembly, the Tat system comprises two distinct complexes: a TatABC complex, containing multiple copies of TatA, TatB and TatC subunits, and a separate TatA complex, containing only TatA subunits. Substrates initially bind to the TatABC complex, which probably triggers association of the separate TatA complex to form the active translocon.

It localises to the cell membrane. Part of the twin-arginine translocation (Tat) system that transports large folded proteins containing a characteristic twin-arginine motif in their signal peptide across membranes. Together with TatC, TatB is part of a receptor directly interacting with Tat signal peptides. TatB may form an oligomeric binding site that transiently accommodates folded Tat precursor proteins before their translocation. The chain is Sec-independent protein translocase protein TatB from Corynebacterium diphtheriae (strain ATCC 700971 / NCTC 13129 / Biotype gravis).